The primary structure comprises 399 residues: Guanine nucleotide-binding protein G(f) subunit alpha (399 aa).

Residues 46–399 enclose the G-alpha domain; that stretch reads TTVKILLLGT…SENVSSMGLF (354 aa). The tract at residues 49–62 is G1 motif; the sequence is KILLLGTAESGKTT. GTP is bound by residues 54–61, 188–194, 221–225, 290–293, and Ala-371; these read GTAESGKT, LHSRKIT, DVGGQ, and NKYD. The tract at residues 186 to 194 is G2 motif; sequence DILHSRKIT. Residue Thr-194 participates in Mg(2+) binding. The tract at residues 217 to 226 is G3 motif; it reads FQMYDVGGQR. Residues 286–293 are G4 motif; the sequence is IVFLNKYD. The G5 motif stretch occupies residues 369–374; sequence TVATDT.

Belongs to the G-alpha family. As to quaternary structure, g proteins are composed of 3 units; alpha, beta and gamma. The alpha chain contains the guanine nucleotide binding site. During embryogenesis, expressed primarily in the developing gut and transiently in the amnioserosa.

Functionally, guanine nucleotide-binding proteins (G proteins) are involved as modulators or transducers in various transmembrane signaling systems. In Drosophila melanogaster (Fruit fly), this protein is Guanine nucleotide-binding protein G(f) subunit alpha (Galphaf).